The sequence spans 181 residues: Probable pyruvoyl-dependent arginine decarboxylase (181 aa).

Pyruvic acid (Ser) is present on Ser43.

The protein belongs to the PdaD family. The cofactor is pyruvate.

It carries out the reaction L-arginine + H(+) = agmatine + CO2. In Chlorobium luteolum (strain DSM 273 / BCRC 81028 / 2530) (Pelodictyon luteolum), this protein is Probable pyruvoyl-dependent arginine decarboxylase.